A 440-amino-acid polypeptide reads, in one-letter code: Xaa-Pro dipeptidase (440 aa).

Mn(2+)-binding residues include D244, D255, H335, E380, and E419.

It belongs to the peptidase M24B family. Bacterial-type prolidase subfamily. It depends on Mn(2+) as a cofactor.

The catalysed reaction is Xaa-L-Pro dipeptide + H2O = an L-alpha-amino acid + L-proline. Functionally, splits dipeptides with a prolyl residue in the C-terminal position. This chain is Xaa-Pro dipeptidase, found in Shewanella piezotolerans (strain WP3 / JCM 13877).